Reading from the N-terminus, the 489-residue chain is Glycogen synthase (489 aa).

Lysine 18 is an ADP-alpha-D-glucose binding site.

The protein belongs to the glycosyltransferase 1 family. Bacterial/plant glycogen synthase subfamily.

The catalysed reaction is [(1-&gt;4)-alpha-D-glucosyl](n) + ADP-alpha-D-glucose = [(1-&gt;4)-alpha-D-glucosyl](n+1) + ADP + H(+). Its pathway is glycan biosynthesis; glycogen biosynthesis. Functionally, synthesizes alpha-1,4-glucan chains using ADP-glucose. The chain is Glycogen synthase from Rhodopseudomonas palustris (strain BisA53).